Consider the following 342-residue polypeptide: S-adenosylmethionine:tRNA ribosyltransferase-isomerase (342 aa).

This sequence belongs to the QueA family. As to quaternary structure, monomer.

The protein localises to the cytoplasm. The enzyme catalyses 7-aminomethyl-7-carbaguanosine(34) in tRNA + S-adenosyl-L-methionine = epoxyqueuosine(34) in tRNA + adenine + L-methionine + 2 H(+). The protein operates within tRNA modification; tRNA-queuosine biosynthesis. In terms of biological role, transfers and isomerizes the ribose moiety from AdoMet to the 7-aminomethyl group of 7-deazaguanine (preQ1-tRNA) to give epoxyqueuosine (oQ-tRNA). This is S-adenosylmethionine:tRNA ribosyltransferase-isomerase from Zymomonas mobilis subsp. mobilis (strain ATCC 31821 / ZM4 / CP4).